A 33-amino-acid polypeptide reads, in one-letter code: Large ribosomal subunit protein eL28 (33 aa).

Belongs to the eukaryotic ribosomal protein eL28 family. As to quaternary structure, component of the large ribosomal subunit.

Its subcellular location is the cytoplasm. In terms of biological role, component of the large ribosomal subunit. The ribosome is a large ribonucleoprotein complex responsible for the synthesis of proteins in the cell. The sequence is that of Large ribosomal subunit protein eL28 (rpl28) from Xenopus laevis (African clawed frog).